The chain runs to 542 residues: Aminotriazole resistance protein (542 aa).

At 1–108 (MGNQSLVVLT…SFGSEGNSKS (108 aa)) the chain is on the cytoplasmic side. The helical transmembrane segment at 109–129 (WLMASFPLVSGSFILISGRLG) threads the bilayer. Over 130–136 (DIYGLKK) the chain is Extracellular. A helical transmembrane segment spans residues 137-157 (MLLVGYVLVIIWSLICGITKY). The Cytoplasmic segment spans residues 158-172 (SGSDTFFIISRAFQG). Residues 173-193 (LGIAFVLPNVLGIIGNIYVGG) form a helical membrane-spanning segment. Topologically, residues 194–198 (TFRKN) are extracellular. The chain crosses the membrane as a helical span at residues 199–219 (IVISFVGAMAPIGATLGCLFA). At 220–231 (GLIGTEDPKQWP) the chain is on the cytoplasmic side. A helical transmembrane segment spans residues 232–252 (WAFYAYSIAAFINFVLSIYAI). Residues 253 to 262 (PSTIPTNIHH) lie on the Extracellular side of the membrane. A helical transmembrane segment spans residues 263–283 (FSMDWIGSVLGVIGLILLNFV). The Cytoplasmic portion of the chain corresponds to 284–295 (WNQAPISGWNQA). Residues 296 to 316 (YIIVILIISVIFLVVFIIYEI) traverse the membrane as a helical segment. Topologically, residues 317-333 (RFAKTPLLPRAVIKDRH) are extracellular. The chain crosses the membrane as a helical span at residues 334–354 (MIQIMLALFFGWGSFGIFTFY). Residues 355 to 371 (YFQFQLNIRQYTALWAG) are Cytoplasmic-facing. The chain crosses the membrane as a helical span at residues 372–392 (GTYFMFLIWGIIAALLVGFTI). Topologically, residues 393 to 399 (KNVSPSV) are extracellular. Residues 400–420 (FLFFSMVAFNVGSIMASVTPV) form a helical membrane-spanning segment. Topologically, residues 421 to 429 (HETYFRTQL) are cytoplasmic. The helical transmembrane segment at 430–450 (GTMIILSFGMDLSFPASSIIF) threads the bilayer. Topologically, residues 451 to 505 (SDNLPMEYQGMAGSLVNTVVNYSMSLCLGMGATVETQVNSDGKHLLKGYRGAQYL) are extracellular. Asn471 is a glycosylation site (N-linked (GlcNAc...) asparagine). A helical transmembrane segment spans residues 506–526 (GIGLASLACMISGLYMVESFI). The Cytoplasmic portion of the chain corresponds to 527 to 542 (KGRRARAAAEYDCTVA).

The protein belongs to the major facilitator superfamily.

The protein resides in the membrane. Putative component of the machinery responsible for pumping aminotriazole (and possibly other toxic compounds) out of the cell. Probable ATP-dependent export permease. Appears to confer resistance only to aminotriazole. This Saccharomyces cerevisiae (strain ATCC 204508 / S288c) (Baker's yeast) protein is Aminotriazole resistance protein (ATR1).